The primary structure comprises 81 residues: ATP synthase subunit c, chloroplastic (81 aa).

The next 2 membrane-spanning stretches (helical) occupy residues 3 to 23 and 57 to 77; these read PLISAASVIAAGLAVGLASIG and LAFMEALTIYGLVVALALLFA.

This sequence belongs to the ATPase C chain family. As to quaternary structure, F-type ATPases have 2 components, F(1) - the catalytic core - and F(0) - the membrane proton channel. F(1) has five subunits: alpha(3), beta(3), gamma(1), delta(1), epsilon(1). F(0) has four main subunits: a(1), b(1), b'(1) and c(10-14). The alpha and beta chains form an alternating ring which encloses part of the gamma chain. F(1) is attached to F(0) by a central stalk formed by the gamma and epsilon chains, while a peripheral stalk is formed by the delta, b and b' chains.

The protein resides in the plastid. It is found in the chloroplast thylakoid membrane. Its function is as follows. F(1)F(0) ATP synthase produces ATP from ADP in the presence of a proton or sodium gradient. F-type ATPases consist of two structural domains, F(1) containing the extramembraneous catalytic core and F(0) containing the membrane proton channel, linked together by a central stalk and a peripheral stalk. During catalysis, ATP synthesis in the catalytic domain of F(1) is coupled via a rotary mechanism of the central stalk subunits to proton translocation. Functionally, key component of the F(0) channel; it plays a direct role in translocation across the membrane. A homomeric c-ring of between 10-14 subunits forms the central stalk rotor element with the F(1) delta and epsilon subunits. This Acorus calamus var. americanus (American sweet flag) protein is ATP synthase subunit c, chloroplastic.